Reading from the N-terminus, the 339-residue chain is Phenylalanine--tRNA ligase alpha subunit (339 aa).

Position 250 (E250) interacts with Mg(2+).

Belongs to the class-II aminoacyl-tRNA synthetase family. Phe-tRNA synthetase alpha subunit type 1 subfamily. Tetramer of two alpha and two beta subunits. It depends on Mg(2+) as a cofactor.

Its subcellular location is the cytoplasm. The enzyme catalyses tRNA(Phe) + L-phenylalanine + ATP = L-phenylalanyl-tRNA(Phe) + AMP + diphosphate + H(+). The chain is Phenylalanine--tRNA ligase alpha subunit from Bacteroides thetaiotaomicron (strain ATCC 29148 / DSM 2079 / JCM 5827 / CCUG 10774 / NCTC 10582 / VPI-5482 / E50).